The chain runs to 601 residues: NADH-quinone oxidoreductase subunit C/D (601 aa).

An NADH dehydrogenase I subunit C region spans residues 1–192; that stretch reads MIVPDLVADA…PPYSLTEDQE (192 aa). The segment at 216–601 is NADH dehydrogenase I subunit D; it reads DFMFLNLGPN…IDFVMADVDR (386 aa).

It in the N-terminal section; belongs to the complex I 30 kDa subunit family. In the C-terminal section; belongs to the complex I 49 kDa subunit family. In terms of assembly, NDH-1 is composed of 13 different subunits. Subunits NuoB, CD, E, F, and G constitute the peripheral sector of the complex.

It localises to the cell inner membrane. The enzyme catalyses a quinone + NADH + 5 H(+)(in) = a quinol + NAD(+) + 4 H(+)(out). Functionally, NDH-1 shuttles electrons from NADH, via FMN and iron-sulfur (Fe-S) centers, to quinones in the respiratory chain. The immediate electron acceptor for the enzyme in this species is believed to be ubiquinone. Couples the redox reaction to proton translocation (for every two electrons transferred, four hydrogen ions are translocated across the cytoplasmic membrane), and thus conserves the redox energy in a proton gradient. The chain is NADH-quinone oxidoreductase subunit C/D from Gluconacetobacter diazotrophicus (strain ATCC 49037 / DSM 5601 / CCUG 37298 / CIP 103539 / LMG 7603 / PAl5).